The sequence spans 143 residues: uncharacterized protein (143 aa).

This is an uncharacterized protein from Homo sapiens (Human).